The primary structure comprises 336 residues: MLKTILVGATGYTGAELAHYITKHPELELAGLYVSEHSLDAGKPFSSLYGHLLGVVDQTIEPLAVSNIKNICDDVDIVVLATAHEVSHDIAAEFLAQDTVVFDLSGAFRVNDPAFYENYYGFKHNFDKELQSAVYGLAEWASADIAEANLIAVPGCYPTASLSALKPLAKHGLISTDQKPIINAVSGVSGAGRKASLASAFCEVSHAPYGVFNHRHQPEISTHLGHEVIFTPHLGSFKRGILATINVKLAAGVTPEQVTAAYQEAYQDQPMVRLLPSGWPSIKAVEKTAYCDLAWQQQGQDLIVVSAIDNLLKGAAAQAMQCINIRFGFAMTTSLV.

Residue Cys156 is part of the active site.

This sequence belongs to the NAGSA dehydrogenase family. Type 1 subfamily.

Its subcellular location is the cytoplasm. The enzyme catalyses N-acetyl-L-glutamate 5-semialdehyde + phosphate + NADP(+) = N-acetyl-L-glutamyl 5-phosphate + NADPH + H(+). It participates in amino-acid biosynthesis; L-arginine biosynthesis; N(2)-acetyl-L-ornithine from L-glutamate: step 3/4. Catalyzes the NADPH-dependent reduction of N-acetyl-5-glutamyl phosphate to yield N-acetyl-L-glutamate 5-semialdehyde. The protein is N-acetyl-gamma-glutamyl-phosphate reductase of Moritella profunda.